A 314-amino-acid chain; its full sequence is Thymidylate synthase (314 aa).

DUMP contacts are provided by residues Arg-32 and 176–177 (RR). Residue Cys-196 is the Nucleophile of the active site. Residues 216-219 (RSCD), Asn-227, and 257-259 (HLY) each bind dUMP. Asp-219 serves as a coordination point for (6R)-5,10-methylene-5,6,7,8-tetrahydrofolate. A (6R)-5,10-methylene-5,6,7,8-tetrahydrofolate-binding site is contributed by Ala-313.

This sequence belongs to the thymidylate synthase family. Bacterial-type ThyA subfamily. In terms of assembly, homodimer.

It is found in the cytoplasm. The catalysed reaction is dUMP + (6R)-5,10-methylene-5,6,7,8-tetrahydrofolate = 7,8-dihydrofolate + dTMP. The protein operates within pyrimidine metabolism; dTTP biosynthesis. Catalyzes the reductive methylation of 2'-deoxyuridine-5'-monophosphate (dUMP) to 2'-deoxythymidine-5'-monophosphate (dTMP) while utilizing 5,10-methylenetetrahydrofolate (mTHF) as the methyl donor and reductant in the reaction, yielding dihydrofolate (DHF) as a by-product. This enzymatic reaction provides an intracellular de novo source of dTMP, an essential precursor for DNA biosynthesis. This Novosphingobium aromaticivorans (strain ATCC 700278 / DSM 12444 / CCUG 56034 / CIP 105152 / NBRC 16084 / F199) protein is Thymidylate synthase.